Reading from the N-terminus, the 546-residue chain is Sodium/hydrogen exchanger 2 (546 aa).

Topologically, residues 1-21 (MTMFASLTSKMLSVSTSDHAS) are cytoplasmic. A helical transmembrane segment spans residues 22–42 (VVSLNLFVALLCACIVIGHLL). At 43–47 (EENRW) the chain is on the vacuolar side. A helical transmembrane segment spans residues 48–68 (MNESITALLIGLGTGVVILLI). At 69-75 (SRGKNSH) the chain is on the cytoplasmic side. The helical intramembrane region spans 76–96 (LLVFSEDLFFIYLLPPIIFNA). At 97–111 (GFQVKKKQFFRNFVT) the chain is on the cytoplasmic side. A helical membrane pass occupies residues 112-132 (IMAFGAIGTVVSCTIISLGAI). Residues 133–148 (QFFKKLDIGTFDLGDF) are Vacuolar-facing. 2 intramembrane regions (helical) span residues 149–168 (LAIG…QVLN) and 174–194 (LLYS…VVLF). Residues 195–218 (NAIQSFDLTHLNHEAAFQFLGNFF) are Vacuolar-facing. Residues 219–239 (YLFLLSTGLGVATGLISAYVI) traverse the membrane as a helical segment. At 240 to 264 (KKLYFGRHSTDREVALMMLMAYLSY) the chain is on the cytoplasmic side. A helical transmembrane segment spans residues 265 to 285 (MLAELFALSGILTVFFCGIVM). At 286-304 (SHYTWHNVTESSRITTKHA) the chain is on the vacuolar side. N292 carries N-linked (GlcNAc...) asparagine glycosylation. The chain crosses the membrane as a helical span at residues 305 to 325 (FATLSFLAETFIFLYVGMDAL). Residues 326–344 (DIEKWRFVSDSPGTSVAVS) are Cytoplasmic-facing. Residues 345 to 365 (SILMGLVMLGRAAFVFPLSFL) form a helical membrane-spanning segment. Residues 366-381 (SNLAKKHQSEKISIKQ) are Vacuolar-facing. Residues 382–402 (QVVIWWAGLMRGAVSMALAYN) traverse the membrane as a helical segment. At 403-415 (KFTRSGHTELRGN) the chain is on the cytoplasmic side. The chain crosses the membrane as a helical span at residues 416-436 (AIMITSTITVCLFSTMVFGML). Topologically, residues 437-546 (TKPLIRYLMP…ERSSHDLSKP (110 aa)) are vacuolar.

It belongs to the monovalent cation:proton antiporter 1 (CPA1) transporter (TC 2.A.36) family. Expressed in roots and shoots.

Its subcellular location is the vacuole membrane. It catalyses the reaction Na(+)(in) + H(+)(out) = Na(+)(out) + H(+)(in). The catalysed reaction is K(+)(in) + H(+)(out) = K(+)(out) + H(+)(in). Functionally, acts in low affinity electroneutral exchange of protons for cations such as Na(+) or K(+) across membranes. May also exchange Li(+) and Cs(+) with a lower affinity. Involved in vacuolar ion compartmentalization necessary for cell volume regulation and cytoplasmic Na(+) detoxification. This Arabidopsis thaliana (Mouse-ear cress) protein is Sodium/hydrogen exchanger 2 (NHX2).